Consider the following 800-residue polypeptide: MLISNEWLKEYVTIDDSVSDLAERITRTGIEVDDLIDYTKDIKNLVVGFVKSKEKHPDADKLNVCQVDIGEDEPVQIVCGAPNVDAGQYVIVAKVGGRLPGGIKIKRAKLRGERSEGMICSLQEIGISSNYIPKSFESGIYVFSESQVPGTDALQALYLDDQVMEFDLTPNRADALSMIGTAYEVAALYNTKMTKPETTSNELELSANDELTVTIENEDKVPYYSARVVHDVTIEPSPIWMQARLIKAGIRPINNVVDISNYVLLEYGQPLHMFDQDAIGSQQIVVRQANEGEKMTTLDDTERELLTSDIVITNGQTPIALAGVMGGDFSEVKEQTSNIVIEGAIFDPVSIRHTSRRLNLRSESSSRFEKGIATEFVDEAVDRACYLLQTYANGKVLKDRVSSGELGAFITPIDITADKINRTIGFDLSQNDIVTIFNQLGFDTEINDDVITVLVPSRRKDITIKEDLIEEVARIYGYDDIPSTLPVFDKVTSGQLTDRQYKTRMVKEVLEGAGLDQAITYSLVSKEDATAFSMQQRQTIDLLMPMSEAHASLRQSLLPHLIEAASYNVARKNKDVKLFEIGNVFFANGEGELPDQVEYLSGILTGDYVVNQWQGKKETVDFYLAKGVVDRVSEKLNLEFSYRRADIDGLHPGRTAEILLENKVVGFIGELHPTLAADNDLKRTYVFELNFDALMAVSVGYINYQPIPRFPGMSRDIALEVDQNIPAADLLSTIHAHGGNILKDTLVFDVYQGEHLEKGKKSIAIRLNYLDTEETLTDERVSKVQAEIEAALIEQGAVIR.

In terms of domain architecture, tRNA-binding spans 39–154 (TKDIKNLVVG…ESQVPGTDAL (116 aa)). The 76-residue stretch at 408 to 483 (AFITPIDITA…RIYGYDDIPS (76 aa)) folds into the B5 domain. Residues Asp-461, Asp-467, Glu-470, and Glu-471 each coordinate Mg(2+). The FDX-ACB domain occupies 708–800 (PRFPGMSRDI…ALIEQGAVIR (93 aa)).

The protein belongs to the phenylalanyl-tRNA synthetase beta subunit family. Type 1 subfamily. Tetramer of two alpha and two beta subunits. Requires Mg(2+) as cofactor.

It localises to the cytoplasm. It catalyses the reaction tRNA(Phe) + L-phenylalanine + ATP = L-phenylalanyl-tRNA(Phe) + AMP + diphosphate + H(+). This chain is Phenylalanine--tRNA ligase beta subunit, found in Staphylococcus aureus (strain Mu50 / ATCC 700699).